Here is a 343-residue protein sequence, read N- to C-terminus: Heat-inducible transcription repressor HrcA (343 aa).

This sequence belongs to the HrcA family.

Its function is as follows. Negative regulator of class I heat shock genes (grpE-dnaK-dnaJ and groELS operons). Prevents heat-shock induction of these operons. The sequence is that of Heat-inducible transcription repressor HrcA from Lysinibacillus sphaericus (Bacillus sphaericus).